Here is an 87-residue protein sequence, read N- to C-terminus: Small ribosomal subunit protein bS20 (87 aa).

The tract at residues 1 to 26 is disordered; the sequence is MANIKSAKKRAIQSEKRRKHNASRRS.

It belongs to the bacterial ribosomal protein bS20 family.

Binds directly to 16S ribosomal RNA. The sequence is that of Small ribosomal subunit protein bS20 from Photorhabdus laumondii subsp. laumondii (strain DSM 15139 / CIP 105565 / TT01) (Photorhabdus luminescens subsp. laumondii).